Here is an 86-residue protein sequence, read N- to C-terminus: Small ribosomal subunit protein bS20 (86 aa).

A disordered region spans residues 1 to 25 (MANIKSQMKRIRTNEAARKRNQSVK).

This sequence belongs to the bacterial ribosomal protein bS20 family.

Binds directly to 16S ribosomal RNA. In Nocardia farcinica (strain IFM 10152), this protein is Small ribosomal subunit protein bS20.